The primary structure comprises 1206 residues: uncharacterized protein (1206 aa).

Disordered regions lie at residues 133–547, 568–837, and 859–1206; these read YDLD…PVDY, FASS…DQLL, and RQRA…KATS. Pro residues-rich tracts occupy residues 139-151 and 159-234; these read IPPPPPGPAPGPP and GESP…PPAP. At Ser-255 the chain carries Phosphoserine. The segment covering 305–319 has biased composition (low complexity); it reads VRTSSIPVQEAPGAS. The span at 351-363 shows a compositional bias: basic and acidic residues; sequence RALEPEQPREPRP. The span at 384–413 shows a compositional bias: pro residues; it reads APPPAPPLPPPAPPLPPPAPSLPPAAPPLP. The segment covering 414–436 has biased composition (low complexity); it reads STELAAPPSSGFMKTSKSNSPAL. The span at 454-467 shows a compositional bias: basic and acidic residues; it reads VDWRDPRQMEKLRS. Over residues 522–531 the composition is skewed to low complexity; sequence PEKSPSSSSL. Residues 568-577 are compositionally biased toward basic and acidic residues; the sequence is FASSAEKEAK. Over residues 656–671 the composition is skewed to low complexity; it reads LPKATPGLTLPLKPTP. Phosphothreonine is present on Thr-680. Positions 732–747 are enriched in basic and acidic residues; the sequence is AEKDLASVRQREKPET. Residues 1001-1016 show a composition bias toward pro residues; the sequence is IPPPPEFSNDPEPPAP. Polar residues predominate over residues 1028 to 1041; sequence PRNNFSDLGQSWGP. Omega-N-methylarginine occurs at positions 1051, 1083, and 1094. Over residues 1170–1184 the composition is skewed to polar residues; it reads PHGNTHYGSPINTFT.

This is an uncharacterized protein from Mus musculus (Mouse).